The primary structure comprises 789 residues: Potassium transporter 4 (789 aa).

Topologically, residues 1-32 (MAPAESGVSPRRNPSQLSWMNLSSNLILAYQS) are cytoplasmic. Serine 9 is modified (phosphoserine). The helical transmembrane segment at 33–53 (FGVVYGDLSTSPLYVFPSTFI) threads the bilayer. Topologically, residues 54–68 (GKLHKHHNEDAVFGA) are extracellular. The chain crosses the membrane as a helical span at residues 69-89 (FSLIFWTLTLIPLLKYLLVLL). Residues 90–154 (SADDNGEGGT…FLEKHKRLRT (65 aa)) are Cytoplasmic-facing. Residues 155–175 (ALLLVVLFGAAMVIGDGVLTP) traverse the membrane as a helical segment. Over 176–195 (ALSVLSSLSGLQATEKNVTD) the chain is Extracellular. Residues 196–216 (GELLVLACVILVGLFALQHCG) form a helical membrane-spanning segment. Over 217–219 (THR) the chain is Cytoplasmic. The chain crosses the membrane as a helical span at residues 220-240 (VAFMFAPIVIIWLISIFFIGL). At 241-270 (YNIIRWNPKIIHAVSPLYIIKFFRVTGQDG) the chain is on the extracellular side. The chain crosses the membrane as a helical span at residues 271–291 (WISLGGVLLSVTGTEAMFANL). Residues 292–300 (GHFTSVSIR) are Cytoplasmic-facing. Residues 301–321 (VAFAVVVYPCLVVQYMGQAAF) form a helical membrane-spanning segment. The Extracellular portion of the chain corresponds to 322–340 (LSKNLGSIPNSFYDSVPDP). The chain crosses the membrane as a helical span at residues 341-361 (VFWPVFVIATLAAIVGSQAVI). The Cytoplasmic portion of the chain corresponds to 362–392 (TTTFSIIKQCHALGCFPRIKVVHTSKHIYGQ). Residues 393–413 (IYIPEINWILMILTLAMAIGF) form a helical membrane-spanning segment. The Extracellular segment spans residues 414–424 (RDTTLIGNAYG). A helical transmembrane segment spans residues 425–445 (IACMVVMFITTFFMALVIVVV). Residues 446–450 (WQKSC) are Cytoplasmic-facing. Residues 451 to 471 (FLAALFLGTLWIIEGVYLSAA) form a helical membrane-spanning segment. Over 472–478 (LMKVTEG) the chain is Extracellular. Residues 479–499 (GWVPFVLTFIFMIAMYVWHYG) form a helical membrane-spanning segment. Topologically, residues 500–789 (TRRKYSFDLH…LIEVGMIYYV (290 aa)) are cytoplasmic.

It belongs to the HAK/KUP transporter (TC 2.A.72.3) family. In terms of tissue distribution, detected at very low levels in roots, stems, leaves and flowers of mature plants and strongly expressed in the roots of potassium-starved plants.

Its subcellular location is the cell membrane. Functionally, high-affinity potassium transporter. This chain is Potassium transporter 4 (POT4), found in Arabidopsis thaliana (Mouse-ear cress).